Reading from the N-terminus, the 205-residue chain is Holliday junction branch migration complex subunit RuvA (205 aa).

The domain I stretch occupies residues 1–62 (MFEYVTGYVE…EDIMALYGFK (62 aa)). Residues 63-141 (TREERLLFTK…DVVPDAFVDL (79 aa)) are domain II. The segment at 142–152 (FSDEERFDEKK) is flexible linker. Positions 153 to 205 (GSSAELDEALEALRALGYAEREVSRVVPELLKESLTTDQYIKKALSLLLNGKR) are domain III.

Belongs to the RuvA family. In terms of assembly, homotetramer. Forms an RuvA(8)-RuvB(12)-Holliday junction (HJ) complex. HJ DNA is sandwiched between 2 RuvA tetramers; dsDNA enters through RuvA and exits via RuvB. An RuvB hexamer assembles on each DNA strand where it exits the tetramer. Each RuvB hexamer is contacted by two RuvA subunits (via domain III) on 2 adjacent RuvB subunits; this complex drives branch migration. In the full resolvosome a probable DNA-RuvA(4)-RuvB(12)-RuvC(2) complex forms which resolves the HJ.

The protein resides in the cytoplasm. The RuvA-RuvB-RuvC complex processes Holliday junction (HJ) DNA during genetic recombination and DNA repair, while the RuvA-RuvB complex plays an important role in the rescue of blocked DNA replication forks via replication fork reversal (RFR). RuvA specifically binds to HJ cruciform DNA, conferring on it an open structure. The RuvB hexamer acts as an ATP-dependent pump, pulling dsDNA into and through the RuvAB complex. HJ branch migration allows RuvC to scan DNA until it finds its consensus sequence, where it cleaves and resolves the cruciform DNA. The sequence is that of Holliday junction branch migration complex subunit RuvA from Bacillus cereus (strain AH187).